Reading from the N-terminus, the 128-residue chain is uncharacterized protein (128 aa).

Transmembrane regions (helical) follow at residues 45-65 (GYFH…LFPF) and 95-115 (FMSH…LSCF).

Its subcellular location is the membrane. This is an uncharacterized protein from Saccharomyces cerevisiae (strain ATCC 204508 / S288c) (Baker's yeast).